Here is a 284-residue protein sequence, read N- to C-terminus: Nucleotide-binding protein Shal_3708 (284 aa).

Residue 8-15 (GRSGSGKS) coordinates ATP. A GTP-binding site is contributed by 56 to 59 (DIRN).

This sequence belongs to the RapZ-like family.

Its function is as follows. Displays ATPase and GTPase activities. This is Nucleotide-binding protein Shal_3708 from Shewanella halifaxensis (strain HAW-EB4).